Reading from the N-terminus, the 236-residue chain is Ribose-5-phosphate isomerase A (236 aa).

Residues 29–32 (SGST), 86–89 (DGAD), and 99–102 (KGGG) contribute to the substrate site. Glutamate 108 acts as the Proton acceptor in catalysis. Lysine 126 is a binding site for substrate.

This sequence belongs to the ribose 5-phosphate isomerase family. In terms of assembly, homodimer.

It catalyses the reaction aldehydo-D-ribose 5-phosphate = D-ribulose 5-phosphate. The protein operates within carbohydrate degradation; pentose phosphate pathway; D-ribose 5-phosphate from D-ribulose 5-phosphate (non-oxidative stage): step 1/1. Its function is as follows. Catalyzes the reversible conversion of ribose-5-phosphate to ribulose 5-phosphate. In Prochlorococcus marinus (strain NATL1A), this protein is Ribose-5-phosphate isomerase A.